A 656-amino-acid polypeptide reads, in one-letter code: DNA mismatch repair protein MutL (656 aa).

Positions 385 to 427 are disordered; the sequence is DNSDSLTEQNSTDYTVNQPETGSVSEKITDRTVESSNEFTDRT. Residues 387–410 are compositionally biased toward polar residues; sequence SDSLTEQNSTDYTVNQPETGSVSE. Over residues 411-427 the composition is skewed to basic and acidic residues; that stretch reads KITDRTVESSNEFTDRT.

This sequence belongs to the DNA mismatch repair MutL/HexB family.

In terms of biological role, this protein is involved in the repair of mismatches in DNA. It is required for dam-dependent methyl-directed DNA mismatch repair. May act as a 'molecular matchmaker', a protein that promotes the formation of a stable complex between two or more DNA-binding proteins in an ATP-dependent manner without itself being part of a final effector complex. The protein is DNA mismatch repair protein MutL of Lactococcus lactis subsp. cremoris (strain SK11).